A 312-amino-acid polypeptide reads, in one-letter code: Pyridoxal kinase (312 aa).

Residue methionine 1 is modified to N-acetylmethionine. Residues serine 12 and threonine 47 each coordinate pyridoxal. Pyridoxal 5'-phosphate is bound at residue threonine 47. Serine 59 is modified (phosphoserine). Position 113 (aspartate 113) interacts with ATP. Aspartate 113 is a binding site for Na(+). Aspartate 118 contacts Mg(2+). Position 148 (threonine 148) interacts with Na(+). 150–153 (NQFE) lines the ATP pocket. Serine 164 bears the Phosphoserine mark. Threonine 186 contributes to the Na(+) binding site. 186 to 187 (TS) lines the ATP pocket. At serine 213 the chain carries Phosphoserine. Residues 226-228 (VDP) and threonine 233 each bind ATP. Residue 234-235 (GD) coordinates pyridoxal 5'-phosphate. Aspartate 235 acts as the Proton acceptor in catalysis. A Phosphoserine modification is found at serine 285.

It belongs to the pyridoxine kinase family. Homodimer. It depends on Zn(2+) as a cofactor. The cofactor is Mg(2+).

The protein localises to the cytoplasm. The protein resides in the cytosol. It carries out the reaction pyridoxal + ATP = pyridoxal 5'-phosphate + ADP + H(+). The enzyme catalyses pyridoxamine + ATP = pyridoxamine 5'-phosphate + ADP + H(+). The catalysed reaction is pyridoxine + ATP = pyridoxine 5'-phosphate + ADP + H(+). It participates in cofactor metabolism; pyridoxal 5'-phosphate salvage; pyridoxal 5'-phosphate from pyridoxal: step 1/1. It functions in the pathway cofactor metabolism; pyridoxal 5'-phosphate salvage; pyridoxine 5'-phosphate from pyridoxine: step 1/1. Its pathway is cofactor metabolism; pyridoxal 5'-phosphate salvage; pyridoxamine 5'-phosphate from pyridoxamine: step 1/1. Its activity is regulated as follows. Activity is increased in the presence of K(+)or Na(+). Its function is as follows. Catalyzes the phosphorylation of the dietary vitamin B6 vitamers pyridoxal (PL), pyridoxine (PN) and pyridoxamine (PM) to form pyridoxal 5'-phosphate (PLP), pyridoxine 5'-phosphate (PNP) and pyridoxamine 5'-phosphate (PMP), respectively. PLP is the active form of vitamin B6, and acts as a cofactor for over 140 different enzymatic reactions. The chain is Pyridoxal kinase (Pdxk) from Rattus norvegicus (Rat).